Here is a 225-residue protein sequence, read N- to C-terminus: PKHD-type hydroxylase YbiX (225 aa).

The 100-residue stretch at 78–177 folds into the Fe2OG dioxygenase domain; sequence TLSTPLFNRY…RVASFMWIQS (100 aa). Residues His96, Asp98, and His158 each contribute to the Fe cation site. Residue Arg168 participates in 2-oxoglutarate binding.

Requires Fe(2+) as cofactor. It depends on L-ascorbate as a cofactor.

The protein is PKHD-type hydroxylase YbiX of Escherichia coli O7:K1 (strain IAI39 / ExPEC).